Reading from the N-terminus, the 73-residue chain is Translation initiation factor IF-1 (73 aa).

Residues 1–73 form the S1-like domain; that stretch reads MSKKKDVIEM…TRGRITYRYK (73 aa).

The protein belongs to the IF-1 family. In terms of assembly, component of the 30S ribosomal translation pre-initiation complex which assembles on the 30S ribosome in the order IF-2 and IF-3, IF-1 and N-formylmethionyl-tRNA(fMet); mRNA recruitment can occur at any time during PIC assembly.

It localises to the cytoplasm. Functionally, one of the essential components for the initiation of protein synthesis. Stabilizes the binding of IF-2 and IF-3 on the 30S subunit to which N-formylmethionyl-tRNA(fMet) subsequently binds. Helps modulate mRNA selection, yielding the 30S pre-initiation complex (PIC). Upon addition of the 50S ribosomal subunit IF-1, IF-2 and IF-3 are released leaving the mature 70S translation initiation complex. This is Translation initiation factor IF-1 from Chloroflexus aurantiacus (strain ATCC 29366 / DSM 635 / J-10-fl).